We begin with the raw amino-acid sequence, 25 residues long: Ribosome-inactivating protein velutin (25 aa).

The interval 1-25 is disordered; it reads XHPDLFXXRPDNTASPKFEDPRLNP.

This sequence belongs to the ribosome-inactivating protein family.

It catalyses the reaction Endohydrolysis of the N-glycosidic bond at one specific adenosine on the 28S rRNA.. Functionally, inhibits protein synthesis but does not possess ribonuclease activity. Also inhibits HIV-1 reverse transcriptase, beta-glucosidase and beta-glucuronidase. In Flammulina velutipes (Agaricus velutipes), this protein is Ribosome-inactivating protein velutin.